Here is a 113-residue protein sequence, read N- to C-terminus: Small ribosomal subunit protein bS6 (113 aa).

It belongs to the bacterial ribosomal protein bS6 family.

Functionally, binds together with bS18 to 16S ribosomal RNA. The sequence is that of Small ribosomal subunit protein bS6 from Flavobacterium johnsoniae (strain ATCC 17061 / DSM 2064 / JCM 8514 / BCRC 14874 / CCUG 350202 / NBRC 14942 / NCIMB 11054 / UW101) (Cytophaga johnsonae).